The primary structure comprises 202 residues: Nucleoid occlusion factor SlmA (202 aa).

In terms of domain architecture, HTH tetR-type spans 14 to 75 (KERQQQVLEV…ALIERIEQTL (62 aa)). A DNA-binding region (H-T-H motif) is located at residues 38 to 57 (TTERLAKAVGVSEGALYRYF).

Belongs to the nucleoid occlusion factor SlmA family. As to quaternary structure, homodimer. Interacts with FtsZ.

The protein resides in the cytoplasm. It localises to the nucleoid. Required for nucleoid occlusion (NO) phenomenon, which prevents Z-ring formation and cell division over the nucleoid. Acts as a DNA-associated cell division inhibitor that binds simultaneously chromosomal DNA and FtsZ, and disrupts the assembly of FtsZ polymers. SlmA-DNA-binding sequences (SBS) are dispersed on non-Ter regions of the chromosome, preventing FtsZ polymerization at these regions. The sequence is that of Nucleoid occlusion factor SlmA from Haemophilus ducreyi (strain 35000HP / ATCC 700724).